The sequence spans 125 residues: Large ribosomal subunit protein uL24 (125 aa).

The protein belongs to the universal ribosomal protein uL24 family. Part of the 50S ribosomal subunit.

Functionally, one of two assembly initiator proteins, it binds directly to the 5'-end of the 23S rRNA, where it nucleates assembly of the 50S subunit. In terms of biological role, one of the proteins that surrounds the polypeptide exit tunnel on the outside of the subunit. In Mycoplasma mobile (strain ATCC 43663 / 163K / NCTC 11711) (Mesomycoplasma mobile), this protein is Large ribosomal subunit protein uL24.